The sequence spans 284 residues: 1D-myo-inositol 2-acetamido-2-deoxy-alpha-D-glucopyranoside deacetylase (284 aa).

The Zn(2+) site is built by His12, Asp15, and His146.

The protein belongs to the MshB deacetylase family. Zn(2+) is required as a cofactor.

It catalyses the reaction 1D-myo-inositol 2-acetamido-2-deoxy-alpha-D-glucopyranoside + H2O = 1D-myo-inositol 2-amino-2-deoxy-alpha-D-glucopyranoside + acetate. In terms of biological role, catalyzes the deacetylation of 1D-myo-inositol 2-acetamido-2-deoxy-alpha-D-glucopyranoside (GlcNAc-Ins) in the mycothiol biosynthesis pathway. The polypeptide is 1D-myo-inositol 2-acetamido-2-deoxy-alpha-D-glucopyranoside deacetylase (Mycolicibacterium vanbaalenii (strain DSM 7251 / JCM 13017 / BCRC 16820 / KCTC 9966 / NRRL B-24157 / PYR-1) (Mycobacterium vanbaalenii)).